The sequence spans 472 residues: Interferon-induced protein with tetratricopeptide repeats 2 (472 aa).

At Ser2 the chain carries N-acetylserine. TPR repeat units lie at residues 51–89 (ATMC…PDQV), 90–135 (EIRS…RIEN), 136–171 (PALD…DPKN), 172–208 (PEFT…SPDN), 244–277 (IDTL…LPNN), 278–333 (AYVH…MLEY), 334–364 (SCSF…KDLP), 365–403 (PGPK…KKKT), and 404–445 (IPQK…GGQQ). The segment at 441-472 (GGGQQADKDSERGVDSANQVPSASLDEDGAEY) is disordered.

This sequence belongs to the IFIT family. In terms of assembly, domain-swapped homodimer. Component of an interferon-dependent multiprotein complex, at least composed of IFIT1, IFIT2 and IFIT3. Interacts with IFIT1 and IFIT3. Interacts with STING1/MITA and disrupts its interaction with MAVS or TBK1. Interacts with EIF3C.

It is found in the cytoplasm. The protein resides in the endoplasmic reticulum. Functionally, IFN-induced antiviral protein which inhibits expression of viral messenger RNAs lacking 2'-O-methylation of the 5' cap. The ribose 2'-O-methylation would provide a molecular signature to distinguish between self and non-self mRNAs by the host during viral infection. Viruses evolved several ways to evade this restriction system such as encoding their own 2'-O-methylase for their mRNAs or by stealing host cap containing the 2'-O-methylation (cap snatching mechanism). Binds AU-rich viral RNAs, with or without 5' triphosphorylation, RNA-binding is required for antiviral activity. Can promote apoptosis. This is Interferon-induced protein with tetratricopeptide repeats 2 (Ifit2) from Mus musculus (Mouse).